The following is a 325-amino-acid chain: Replication factor C small subunit (325 aa).

54-61 (GPAGTGKT) is an ATP binding site.

This sequence belongs to the activator 1 small subunits family. RfcS subfamily. Heteromultimer composed of small subunits (RfcS) and large subunits (RfcL).

Functionally, part of the RFC clamp loader complex which loads the PCNA sliding clamp onto DNA. The protein is Replication factor C small subunit of Haloarcula marismortui (strain ATCC 43049 / DSM 3752 / JCM 8966 / VKM B-1809) (Halobacterium marismortui).